The primary structure comprises 1097 residues: Platelet-derived growth factor receptor beta (1097 aa).

A signal peptide spans 1–31 (MGLPEVMPASVLRGQLLLFVLLLLGPQISQG). Ig-like C2-type domains lie at 32-119 (LVIT…YIFV), 128-209 (PMDS…YSLQ), and 213-308 (INVS…INVT). The Extracellular segment spans residues 32-531 (LVITPPGPEF…VVPHSLPFKV (500 aa)). Asn-44, Asn-88, and Asn-102 each carry an N-linked (GlcNAc...) asparagine glycan. A disulfide bridge connects residues Cys-53 and Cys-99. Cys-148 and Cys-189 are joined by a disulfide. Asn-214 carries N-linked (GlcNAc...) asparagine glycosylation. Cys-234 and Cys-290 are disulfide-bonded. Asn-291, Asn-306, Asn-353, Asn-370, Asn-444, Asn-467, and Asn-478 each carry an N-linked (GlcNAc...) asparagine glycan. An Ig-like C2-type 4 domain is found at 415–523 (PVRVLELSES…GRDSQEVTVV (109 aa)). Cys-435 and Cys-507 are joined by a disulfide. Residues 532–552 (VVISAILALVVLTVISLIILI) form a helical membrane-spanning segment. Residues 553–1097 (MLWQRKPRYE…PLAEAEDSFL (545 aa)) lie on the Cytoplasmic side of the membrane. 3 positions are modified to phosphotyrosine; by autocatalysis: Tyr-561, Tyr-578, and Tyr-580. Residues 599–961 (LVLGRTLGSG…QLVLLLERLL (363 aa)) form the Protein kinase domain. ATP-binding positions include 605-613 (LGSGAFGQV) and Lys-633. Position 685 is a phosphotyrosine; by ABL1 and ABL2 (Tyr-685). A phosphotyrosine; by autocatalysis mark is found at Tyr-715, Tyr-739, Tyr-750, Tyr-762, Tyr-770, Tyr-774, and Tyr-777. Asp-825 functions as the Proton acceptor in the catalytic mechanism. A Phosphotyrosine; by autocatalysis modification is found at Tyr-856. 2 positions are modified to phosphotyrosine; by ABL1 and ABL2: Tyr-933 and Tyr-969. A phosphotyrosine; by autocatalysis mark is found at Tyr-1008 and Tyr-1020. Positions 1016–1097 (TDNDYIIPLP…PLAEAEDSFL (82 aa)) are disordered. The segment covering 1042 to 1059 (SLASSTLNEVNTSSTISC) has biased composition (polar residues). Positions 1072-1081 (EPEAQLEQPQ) are enriched in low complexity.

This sequence belongs to the protein kinase superfamily. Tyr protein kinase family. CSF-1/PDGF receptor subfamily. Interacts with homodimeric PDGFB and PDGFD, and with heterodimers formed by PDGFA and PDGFB. May also interact with homodimeric PDGFC. Monomer in the absence of bound ligand. Interaction with homodimeric PDGFB, heterodimers formed by PDGFA and PDGFB or homodimeric PDGFD, leads to receptor dimerization, where both PDGFRA homodimers and heterodimers with PDGFRB are observed. Interacts with SH2B2/APS. Interacts directly (tyrosine phosphorylated) with SHB. Interacts (tyrosine phosphorylated) with PIK3R1 and RASA1. Interacts (tyrosine phosphorylated) with CBL. Interacts (tyrosine phosphorylated) with SRC and SRC family kinases. Interacts (tyrosine phosphorylated) with PIK3C2B, maybe indirectly. Interacts (tyrosine phosphorylated) with SHC1, GRB7, GRB10 and NCK1. Interaction with GRB2 is mediated by SHC1. Interacts (via C-terminus) with NHERF1. Post-translationally, N-glycosylated. In terms of processing, ubiquitinated. After autophosphorylation, the receptor is polyubiquitinated, leading to its degradation. Autophosphorylated on tyrosine residues upon ligand binding. Autophosphorylation occurs in trans, i.e. one subunit of the dimeric receptor phosphorylates tyrosine residues on the other subunit. Phosphorylation at Tyr-578, and to a lesser degree, Tyr-580 is important for interaction with SRC. Phosphorylation at Tyr-715 is important for interaction with GRB2. Phosphorylation at Tyr-739 and Tyr-750 is important for interaction with PIK3R1. Phosphorylation at Tyr-750 is important for interaction with NCK1. Phosphorylation at Tyr-770 and Tyr-856 is important for interaction with RASA1/GAP. Phosphorylation at Tyr-856 is important for efficient phosphorylation of PLCG1 and PTPN11, resulting in increased phosphorylation of AKT1, MAPK1/ERK2 and/or MAPK3/ERK1, PDCD6IP/ALIX and STAM, and in increased cell proliferation. Phosphorylation at Tyr-1008 is important for interaction with PTPN11. Phosphorylation at Tyr-1008 and Tyr-1020 is important for interaction with PLCG1. Dephosphorylated by PTPRJ at Tyr-750, Tyr-856, Tyr-1008 and Tyr-1020. Dephosphorylated by PTPN2 at Tyr-578 and Tyr-1020.

The protein resides in the cell membrane. It is found in the cytoplasmic vesicle. It localises to the lysosome lumen. It carries out the reaction L-tyrosyl-[protein] + ATP = O-phospho-L-tyrosyl-[protein] + ADP + H(+). With respect to regulation, present in an inactive conformation in the absence of bound ligand. Binding of PDGFB and/or PDGFD leads to dimerization and activation by autophosphorylation on tyrosine residues. Its function is as follows. Tyrosine-protein kinase that acts as a cell-surface receptor for homodimeric PDGFB and PDGFD and for heterodimers formed by PDGFA and PDGFB, and plays an essential role in the regulation of embryonic development, cell proliferation, survival, differentiation, chemotaxis and migration. Plays an essential role in blood vessel development by promoting proliferation, migration and recruitment of pericytes and smooth muscle cells to endothelial cells. Plays a role in the migration of vascular smooth muscle cells and the formation of neointima at vascular injury sites. Required for normal development of the cardiovascular system. Required for normal recruitment of pericytes (mesangial cells) in the kidney glomerulus, and for normal formation of a branched network of capillaries in kidney glomeruli. Promotes rearrangement of the actin cytoskeleton and the formation of membrane ruffles. Binding of its cognate ligands - homodimeric PDGFB, heterodimers formed by PDGFA and PDGFB or homodimeric PDGFD -leads to the activation of several signaling cascades; the response depends on the nature of the bound ligand and is modulated by the formation of heterodimers between PDGFRA and PDGFRB. Phosphorylates PLCG1, PIK3R1, PTPN11, RASA1/GAP, CBL, SHC1 and NCK1. Activation of PLCG1 leads to the production of the cellular signaling molecules diacylglycerol and inositol 1,4,5-trisphosphate, mobilization of cytosolic Ca(2+) and the activation of protein kinase C. Phosphorylation of PIK3R1, the regulatory subunit of phosphatidylinositol 3-kinase, leads to the activation of the AKT1 signaling pathway. Phosphorylation of SHC1, or of the C-terminus of PTPN11, creates a binding site for GRB2, resulting in the activation of HRAS, RAF1 and down-stream MAP kinases, including MAPK1/ERK2 and/or MAPK3/ERK1. Promotes phosphorylation and activation of SRC family kinases. Promotes phosphorylation of PDCD6IP/ALIX and STAM. Receptor signaling is down-regulated by protein phosphatases that dephosphorylate the receptor and its down-stream effectors, and by rapid internalization of the activated receptor. This chain is Platelet-derived growth factor receptor beta (Pdgfrb), found in Rattus norvegicus (Rat).